A 595-amino-acid polypeptide reads, in one-letter code: Probable translation initiation factor IF-2 (595 aa).

The region spanning 11–225 (LRTPIVAVLG…ILVGLAQRYL (215 aa)) is the tr-type G domain. The interval 20–27 (GHVDHGKT) is G1. GTP is bound at residue 20–27 (GHVDHGKT). The segment at 45–49 (GITQH) is G2. The interval 81–84 (DTPG) is G3. GTP is bound by residues 81-85 (DTPGH) and 135-138 (NKID). The segment at 135–138 (NKID) is G4. The interval 203–205 (SAL) is G5.

Belongs to the TRAFAC class translation factor GTPase superfamily. Classic translation factor GTPase family. IF-2 subfamily.

Functionally, function in general translation initiation by promoting the binding of the formylmethionine-tRNA to ribosomes. Seems to function along with eIF-2. The polypeptide is Probable translation initiation factor IF-2 (infB) (Archaeoglobus fulgidus (strain ATCC 49558 / DSM 4304 / JCM 9628 / NBRC 100126 / VC-16)).